The sequence spans 62 residues: Photosystem II reaction center protein K (62 aa).

Positions 1–25 (MPNILSLTCICFNSVLYPTTSFFFA) are excised as a propeptide. Residues 33–53 (IFNPIVDVMPVIPLFFFLLAF) traverse the membrane as a helical segment.

The protein belongs to the PsbK family. As to quaternary structure, PSII is composed of 1 copy each of membrane proteins PsbA, PsbB, PsbC, PsbD, PsbE, PsbF, PsbH, PsbI, PsbJ, PsbK, PsbL, PsbM, PsbT, PsbX, PsbY, PsbZ, Psb30/Ycf12, at least 3 peripheral proteins of the oxygen-evolving complex and a large number of cofactors. It forms dimeric complexes.

Its subcellular location is the plastid. It is found in the chloroplast thylakoid membrane. In terms of biological role, one of the components of the core complex of photosystem II (PSII). PSII is a light-driven water:plastoquinone oxidoreductase that uses light energy to abstract electrons from H(2)O, generating O(2) and a proton gradient subsequently used for ATP formation. It consists of a core antenna complex that captures photons, and an electron transfer chain that converts photonic excitation into a charge separation. The polypeptide is Photosystem II reaction center protein K (Agrostis stolonifera (Creeping bentgrass)).